A 299-amino-acid polypeptide reads, in one-letter code: Lysine exporter LysO (299 aa).

8 consecutive transmembrane segments (helical) span residues 1-21 (MFSG…IPLR), 31-51 (QLLS…LAFL), 58-78 (LLAI…CNIA), 109-129 (LKLC…LAFL), 131-151 (HATE…GIQL), 169-189 (IVAV…AFIL), 207-227 (SLSG…AAFF), and 277-297 (PAAI…IAFF).

Belongs to the LysO family.

Its subcellular location is the cell inner membrane. Its function is as follows. Mediates export of lysine. This is Lysine exporter LysO from Escherichia coli (strain K12).